The following is a 56-amino-acid chain: Light-harvesting protein B-880 beta chain (56 aa).

The Cytoplasmic segment spans residues alanine 1 to glycine 22. The a bacteriochlorophyll site is built by histidine 21 and histidine 39. A helical membrane pass occupies residues valine 23–tryptophan 45. The Periplasmic segment spans residues arginine 46–alanine 56.

The protein belongs to the antenna complex beta subunit family. As to quaternary structure, the core complex is formed by different alpha and beta chains, binding bacteriochlorophyll molecules, and arranged most probably in tetrameric structures disposed around the reaction center. The non-pigmented gamma chains may constitute additional components.

It is found in the cell inner membrane. Functionally, antenna complexes are light-harvesting systems, which transfer the excitation energy to the reaction centers. In Afifella marina (Rhodobium marinum), this protein is Light-harvesting protein B-880 beta chain.